Reading from the N-terminus, the 61-residue chain is Large ribosomal subunit protein bL32 (61 aa).

This sequence belongs to the bacterial ribosomal protein bL32 family.

This Ehrlichia canis (strain Jake) protein is Large ribosomal subunit protein bL32.